The sequence spans 100 residues: Urease subunit gamma (100 aa).

It belongs to the urease gamma subunit family. As to quaternary structure, heterotrimer of UreA (gamma), UreB (beta) and UreC (alpha) subunits. Three heterotrimers associate to form the active enzyme.

The protein resides in the cytoplasm. The enzyme catalyses urea + 2 H2O + H(+) = hydrogencarbonate + 2 NH4(+). Its pathway is nitrogen metabolism; urea degradation; CO(2) and NH(3) from urea (urease route): step 1/1. The chain is Urease subunit gamma from Mycolicibacterium smegmatis (strain ATCC 700084 / mc(2)155) (Mycobacterium smegmatis).